The primary structure comprises 364 residues: Aminomethyltransferase (364 aa).

Belongs to the GcvT family. In terms of assembly, the glycine cleavage system is composed of four proteins: P, T, L and H.

It catalyses the reaction N(6)-[(R)-S(8)-aminomethyldihydrolipoyl]-L-lysyl-[protein] + (6S)-5,6,7,8-tetrahydrofolate = N(6)-[(R)-dihydrolipoyl]-L-lysyl-[protein] + (6R)-5,10-methylene-5,6,7,8-tetrahydrofolate + NH4(+). The glycine cleavage system catalyzes the degradation of glycine. The sequence is that of Aminomethyltransferase from Shewanella baltica (strain OS223).